A 505-amino-acid polypeptide reads, in one-letter code: Sodium/sialic acid symporter NanT (505 aa).

5 helical membrane passes run 9-29 (LNYI…VYFA), 45-65 (IPGW…ITFM), 80-100 (IGQY…IPFF), 128-148 (FMLF…LALM), and 155-175 (PLMI…LGGI). Residue alanine 56 coordinates Na(+). Residue threonine 58 participates in N-acetyl-alpha-neuraminate binding. Leucine 59 is a binding site for Na(+). N-acetyl-alpha-neuraminate-binding residues include serine 60, threonine 63, glutamine 82, and arginine 135. Aspartate 182 lines the Na(+) pocket. Helical transmembrane passes span 183–203 (VIQG…ICFN), 227–247 (FSWS…FFAS), 280–300 (LVAC…AYYT), and 318–338 (FYVI…AIFA). Alanine 339, serine 342, serine 343, serine 345, and serine 346 together coordinate Na(+). 4 consecutive transmembrane segments (helical) span residues 378–398 (TLTV…IMSN), 406–426 (FNSL…LGIF), 435–455 (ALLG…ATDL), and 457–477 (FFFY…LTAP).

It belongs to the sodium:solute symporter (SSF) (TC 2.A.21) family.

It localises to the cell inner membrane. The catalysed reaction is N-acetyl-alpha-neuraminate(out) + 2 Na(+)(out) = N-acetyl-alpha-neuraminate(in) + 2 Na(+)(in). Its function is as follows. Symporter that uses the Na(+) gradient as the driving force for the uptake of the sialic acid N-acetylneuraminic acid (Neu5Ac). Might play a role in persistence after colonization. This is Sodium/sialic acid symporter NanT from Aliivibrio fischeri (strain ATCC 700601 / ES114) (Vibrio fischeri).